Here is a 237-residue protein sequence, read N- to C-terminus: Phosphoribosylaminoimidazole-succinocarboxamide synthase (237 aa).

Belongs to the SAICAR synthetase family.

The catalysed reaction is 5-amino-1-(5-phospho-D-ribosyl)imidazole-4-carboxylate + L-aspartate + ATP = (2S)-2-[5-amino-1-(5-phospho-beta-D-ribosyl)imidazole-4-carboxamido]succinate + ADP + phosphate + 2 H(+). It functions in the pathway purine metabolism; IMP biosynthesis via de novo pathway; 5-amino-1-(5-phospho-D-ribosyl)imidazole-4-carboxamide from 5-amino-1-(5-phospho-D-ribosyl)imidazole-4-carboxylate: step 1/2. The sequence is that of Phosphoribosylaminoimidazole-succinocarboxamide synthase from Psychrobacter cryohalolentis (strain ATCC BAA-1226 / DSM 17306 / VKM B-2378 / K5).